A 369-amino-acid polypeptide reads, in one-letter code: Flagellar P-ring protein (369 aa).

A signal peptide spans 1 to 22; it reads MIKLKQLIAATLLLSTAFGVHA.

It belongs to the FlgI family. As to quaternary structure, the basal body constitutes a major portion of the flagellar organelle and consists of four rings (L,P,S, and M) mounted on a central rod.

It localises to the periplasm. The protein resides in the bacterial flagellum basal body. Assembles around the rod to form the L-ring and probably protects the motor/basal body from shearing forces during rotation. This chain is Flagellar P-ring protein, found in Pseudomonas savastanoi pv. phaseolicola (strain 1448A / Race 6) (Pseudomonas syringae pv. phaseolicola (strain 1448A / Race 6)).